The primary structure comprises 414 residues: WW domain-containing oxidoreductase (414 aa).

Positions Met1–Glu23 are disordered. Residues Glu16 to Ser49 enclose the WW 1 domain. Positions Gly50–Val55 match the Nuclear localization signal motif. One can recognise a WW 2 domain in the interval Gly57–Leu90. An NADP(+)-binding site is contributed by Gly131–Gly137. Ser260 provides a ligand contact to substrate. Tyr293 (proton acceptor) is an active-site residue.

It belongs to the short-chain dehydrogenases/reductases (SDR) family.

Its subcellular location is the cytoplasm. It localises to the mitochondrion. The protein localises to the golgi apparatus. It is found in the lysosome. In terms of biological role, putative oxidoreductase. Acts as a tumor suppressor and plays a role in apoptosis. May function synergistically with p53/TP53 to control genotoxic stress-induced cell death. Plays a role in TGFB1 signaling and TGFB1-mediated cell death. May also play a role in tumor necrosis factor (TNF)-mediated cell death. Required for normal bone development. Inhibits Wnt signaling. The sequence is that of WW domain-containing oxidoreductase (WWOX) from Gallus gallus (Chicken).